Consider the following 193-residue polypeptide: ATP-dependent Clp protease proteolytic subunit (193 aa).

S98 (nucleophile) is an active-site residue. H123 is an active-site residue.

This sequence belongs to the peptidase S14 family. Fourteen ClpP subunits assemble into 2 heptameric rings which stack back to back to give a disk-like structure with a central cavity, resembling the structure of eukaryotic proteasomes.

It is found in the cytoplasm. It catalyses the reaction Hydrolysis of proteins to small peptides in the presence of ATP and magnesium. alpha-casein is the usual test substrate. In the absence of ATP, only oligopeptides shorter than five residues are hydrolyzed (such as succinyl-Leu-Tyr-|-NHMec, and Leu-Tyr-Leu-|-Tyr-Trp, in which cleavage of the -Tyr-|-Leu- and -Tyr-|-Trp bonds also occurs).. Functionally, cleaves peptides in various proteins in a process that requires ATP hydrolysis. Has a chymotrypsin-like activity. Plays a major role in the degradation of misfolded proteins. This Glaesserella parasuis serovar 5 (strain SH0165) (Haemophilus parasuis) protein is ATP-dependent Clp protease proteolytic subunit.